A 222-amino-acid chain; its full sequence is Dual specificity phosphatase 29 (222 aa).

Residues 54 to 202 (HVNEVWPKLY…LRELDKQLVQ (149 aa)) enclose the Tyrosine-protein phosphatase domain. 146–153 (HCAMGRSR) lines the substrate pocket. Cys147 functions as the Phosphocysteine intermediate in the catalytic mechanism. Residues 201 to 222 (VQQRRGAQHRGEAGEKAGEKEP) are disordered. The span at 209–222 (HRGEAGEKAGEKEP) shows a compositional bias: basic and acidic residues.

The protein belongs to the protein-tyrosine phosphatase family. Non-receptor class dual specificity subfamily. Homodimer. Interacts with PRKAA2.

Its subcellular location is the cytoplasm. The protein resides in the nucleus. The enzyme catalyses O-phospho-L-tyrosyl-[protein] + H2O = L-tyrosyl-[protein] + phosphate. It carries out the reaction O-phospho-L-seryl-[protein] + H2O = L-seryl-[protein] + phosphate. The catalysed reaction is O-phospho-L-threonyl-[protein] + H2O = L-threonyl-[protein] + phosphate. In terms of biological role, dual specificity phosphatase able to dephosphorylate phosphotyrosine, phosphoserine and phosphothreonine residues within the same substrate, with a preference for phosphotyrosine as a substrate. Involved in the modulation of intracellular signaling cascades. In skeletal muscle regulates systemic glucose homeostasis by activating, AMPK, an energy sensor protein kinase. Affects MAP kinase signaling though modulation of the MAPK1/2 cascade in skeletal muscle promoting muscle cell differentiation, development and atrophy. This chain is Dual specificity phosphatase 29 (DUSP29), found in Sus scrofa (Pig).